The primary structure comprises 829 residues: Telomere length regulation protein TEL2 homolog (829 aa).

Disordered stretches follow at residues 446–493 (SADF…DDLV) and 620–641 (SEKP…PHSI). Residues 456–466 (SSPSKSPLSSP) are compositionally biased toward low complexity. Residues 467–480 (EVREKSKVKVKADQ) show a composition bias toward basic and acidic residues. A compositionally biased stretch (acidic residues) spans 482–493 (SDSDLDSDDDLV). A compositionally biased stretch (polar residues) spans 629-641 (AESGSVNTDPHSI).

Belongs to the TEL2 family.

The protein localises to the cytoplasm. It is found in the membrane. The protein resides in the nucleus. Its subcellular location is the chromosome. It localises to the telomere. In terms of biological role, regulator of the DNA damage response (DDR). Part of the TTT complex that is required to stabilize protein levels of the phosphatidylinositol 3-kinase-related protein kinase (PIKK) family proteins. Promotes assembly, stabilizes and maintains the activity of TORC complexes, which regulate cell growth and survival in response to nutrient and hormonal signals. May be involved in telomere length regulation. The sequence is that of Telomere length regulation protein TEL2 homolog (telo2) from Xenopus tropicalis (Western clawed frog).